The primary structure comprises 1075 residues: DNA-directed RNA polymerase subunit beta (1075 aa).

Belongs to the RNA polymerase beta chain family. As to quaternary structure, in plastids the minimal PEP RNA polymerase catalytic core is composed of four subunits: alpha, beta, beta', and beta''. When a (nuclear-encoded) sigma factor is associated with the core the holoenzyme is formed, which can initiate transcription.

The protein localises to the plastid. It localises to the chloroplast. The catalysed reaction is RNA(n) + a ribonucleoside 5'-triphosphate = RNA(n+1) + diphosphate. In terms of biological role, DNA-dependent RNA polymerase catalyzes the transcription of DNA into RNA using the four ribonucleoside triphosphates as substrates. This Zea mays (Maize) protein is DNA-directed RNA polymerase subunit beta.